The sequence spans 419 residues: Monooxygenase CTB7 (419 aa).

It belongs to the aromatic-ring hydroxylase family. KMO subfamily.

The protein operates within mycotoxin biosynthesis. In terms of biological role, monooxygenase; part of the gene cluster that mediates the biosynthesis of cercosporin, a light-activated, non-host-selective toxin. The perylenequinone chromophore of cercosporin absorbs light energy to attain an electronically-activated triplet state and produces active oxygen species such as the hydroxyl radical, superoxide, hydrogen peroxide or singlet oxygen upon reaction with oxygen molecules. These reactive oxygen species cause damage to various cellular components including lipids, proteins and nucleic acids. The first step of cercosporin biosynthesis is performed by the polyketide synthase CTB1 which catalyzes the formation of nor-toralactone. The starter unit acyltransferase (SAT) domain of CTB1 initiates polyketide extension by the selective utilization of acetyl-CoA, which is elongated to the heptaketide in the beta-ketoacyl synthase (KS) domain by successive condensations with six malonyl units introduced by the malonyl acyltransferase (MAT) domain. The product template (PT) domain catalyzes C4-C9 and C2-C11 aldol cyclizations and dehydrations to a trihydroxynaphthalene, which is thought to be delivered to the thioesterase (TE) domain for product release. The bifunctional enzyme CTB3 then methylates nor-toralactone to toralactone before conducting an unusual oxidative aromatic ring opening. The O-methyltransferase CTB2 further methylates the nascent OH-6 of the CBT3 product, blocking further oxidation at this site before the reductase CTB6 reduces the 2-oxopropyl ketone at position C7, giving naphthalene. The FAD-dependent monooxygenase CTB5 in concert with the multicopper oxidase CTB12 are responsible for homodimerization of naphthalene with CTB7 installing the dioxepine moiety, finally producing cercosporin. The fasciclin domain-containing protein CTB11 might act with CTB5 and CTB12 whereas the roles of CTB9 and CTB10 have still to be elucidated. In Cercospora beticola (Sugarbeet leaf spot fungus), this protein is Monooxygenase CTB7.